The following is a 123-amino-acid chain: Holo-[acyl-carrier-protein] synthase (123 aa).

2 residues coordinate Mg(2+): Asp-8 and Glu-60.

This sequence belongs to the P-Pant transferase superfamily. AcpS family. Requires Mg(2+) as cofactor.

It localises to the cytoplasm. The enzyme catalyses apo-[ACP] + CoA = holo-[ACP] + adenosine 3',5'-bisphosphate + H(+). Functionally, transfers the 4'-phosphopantetheine moiety from coenzyme A to a Ser of acyl-carrier-protein. The chain is Holo-[acyl-carrier-protein] synthase from Ehrlichia ruminantium (strain Gardel).